Reading from the N-terminus, the 103-residue chain is Eukaryotic translation initiation factor 4E-1A-binding protein homolog (103 aa).

The interval 49–103 (NSPLSKTPPPQLAHITNTELNKKVEKSTTTPTTTTPPTTTAKPKPTNDDDIFPME) is disordered. Low complexity predominate over residues 76 to 92 (TTTPTTTTPPTTTAKPK).

This sequence belongs to the eIF4E-binding protein family.

Functionally, regulates assembly of the eIF4F complex. This Dictyostelium discoideum (Social amoeba) protein is Eukaryotic translation initiation factor 4E-1A-binding protein homolog (febA).